The chain runs to 1366 residues: DNA-directed RNA polymerase subunit beta' (1366 aa).

Basic residues predominate over residues 1 to 23 (MTSSKPKKSSRVRKTSKNSKKNN). Residues 1–25 (MTSSKPKKSSRVRKTSKNSKKNNKI) are disordered. Zn(2+) contacts are provided by cysteine 248, cysteine 315, cysteine 322, and cysteine 325. The disordered stretch occupies residues 1290 to 1366 (DYTVDMPQSP…LQEEGLLSDE (77 aa)). A compositionally biased stretch (polar residues) spans 1295–1305 (MPQSPTVSSTA). The span at 1354 to 1366 (LEGLQEEGLLSDE) shows a compositional bias: low complexity.

Belongs to the RNA polymerase beta' chain family. RpoC2 subfamily. In cyanobacteria the RNAP catalytic core is composed of 2 alpha, 1 beta, 1 beta', 1 gamma and 1 omega subunit. When a sigma factor is associated with the core the holoenzyme is formed, which can initiate transcription. Requires Zn(2+) as cofactor.

It catalyses the reaction RNA(n) + a ribonucleoside 5'-triphosphate = RNA(n+1) + diphosphate. Its function is as follows. DNA-dependent RNA polymerase catalyzes the transcription of DNA into RNA using the four ribonucleoside triphosphates as substrates. The polypeptide is DNA-directed RNA polymerase subunit beta' (Prochlorococcus marinus (strain MIT 9515)).